A 227-amino-acid chain; its full sequence is MSVAVETFGFFMSALGLLMLGLTLSNSYWRVSTVHGNVITTNTIFENLWYSCATDSLGVSNCWDFPSMLALSGYVQGCRALMITAILLGFLGLFLGMVGLRCTNVGNMDLSKKAKLLAIAGTLHILAGACGMVAISWYAVNITTDFFNPLYAGTKYELGPALYLGWSASLLSILGGICVFSTCCCSSKEEPATRAGLPYKPSTVVIPRATSDESDISFGKYGKNAYV.

Met1 is a topological domain (cytoplasmic). Residues 2–24 (SVAVETFGFFMSALGLLMLGLTL) form a helical membrane-spanning segment. The Extracellular portion of the chain corresponds to 25–74 (SNSYWRVSTVHGNVITTNTIFENLWYSCATDSLGVSNCWDFPSMLALSGY). A disulfide bond links Cys52 and Cys62. The chain crosses the membrane as a helical span at residues 75–99 (VQGCRALMITAILLGFLGLFLGMVG). The Cytoplasmic segment spans residues 100–115 (LRCTNVGNMDLSKKAK). Ser111 carries the post-translational modification Phosphoserine. Residues 116 to 140 (LLAIAGTLHILAGACGMVAISWYAV) traverse the membrane as a helical segment. Topologically, residues 141-159 (NITTDFFNPLYAGTKYELG) are extracellular. Residues 146–147 (FF) are important for the formation of tight-junction strand-like structures. Residues 160-182 (PALYLGWSASLLSILGGICVFST) form a helical membrane-spanning segment. At 183 to 227 (CCCSSKEEPATRAGLPYKPSTVVIPRATSDESDISFGKYGKNAYV) the chain is on the cytoplasmic side. Phosphoserine occurs at positions 211, 214, and 217.

The protein belongs to the claudin family. Can form homo- and heteropolymeric tight junction strands. In terms of processing, palmitoylated when heterogeneously expressed in S.frugiperda cells. In terms of tissue distribution, detected in duodenum, jejunum and ileum. Detected on intestinal villi and crypts (at protein level). Ubiquitous. Detected in small and large intestine, colon, jejunum, heart, kidney and lung.

The protein resides in the cell junction. It is found in the tight junction. Its subcellular location is the cell membrane. It carries out the reaction Na(+)(in) = Na(+)(out). It catalyses the reaction K(+)(in) = K(+)(out). The enzyme catalyses Cs(+)(in) = Cs(+)(out). The catalysed reaction is Rb(+)(in) = Rb(+)(out). It carries out the reaction Li(+)(in) = Li(+)(out). It catalyses the reaction NH4(+)(in) = NH4(+)(out). The enzyme catalyses methylamine(out) = methylamine(in). The catalysed reaction is H2O(in) = H2O(out). Its function is as follows. Forms paracellular channels: polymerizes in tight junction strands with cation- and water-selective channels through the strands, conveying epithelial permeability in a process known as paracellular tight junction permeability. In intestinal epithelium, allows for sodium and water fluxes from the peritoneal side to the lumen of the intestine to regulate nutrient absorption and intestinal morphogenesis. The polypeptide is Claudin-15 (Mus musculus (Mouse)).